Consider the following 444-residue polypeptide: Phosphoglucosamine mutase (444 aa).

The Phosphoserine intermediate role is filled by S104. The Mg(2+) site is built by S104, D243, D245, and D247. A Phosphoserine modification is found at S104.

This sequence belongs to the phosphohexose mutase family. Mg(2+) is required as a cofactor. Post-translationally, activated by phosphorylation.

The enzyme catalyses alpha-D-glucosamine 1-phosphate = D-glucosamine 6-phosphate. Catalyzes the conversion of glucosamine-6-phosphate to glucosamine-1-phosphate. This chain is Phosphoglucosamine mutase, found in Neisseria gonorrhoeae (strain ATCC 700825 / FA 1090).